A 364-amino-acid polypeptide reads, in one-letter code: MLRPKIRVLIVDDSASVRQILTTILNADPDIEVMASAADPFAAARRLQDEIPDVIILDIEMPRMDGITFLRKIMAQRPIPVIICSTLTEERSDVMFEAFEAGAFDIVPKPRIDTTHALLEASARMCDAVKAAARARIRPRRPPRMVVEAKLTADAIMPPPVSGRARPTTERLVCIGVSTGGTEALRDVLECLPAKAPAILIVQHMPQGFTAAFAKRLDSLCEIEVREAQDGDVVVQGCAYIAPGGRHMLLQRTGQRYHIAIKDGPPVSRHRPSADVLFRSAAQYAGPNALGIIMTGMGDDGARGLLEMHKLGATTRAQDEESCVVFGMPKEAIALGGVDKVVPLAQIPREIMLWQDAKQPVPTV.

The region spanning 7 to 124 (RVLIVDDSAS…THALLEASAR (118 aa)) is the Response regulatory domain. The residue at position 58 (Asp-58) is a 4-aspartylphosphate. The region spanning 167–358 (PTTERLVCIG…REIMLWQDAK (192 aa)) is the CheB-type methylesterase domain. Residues Ser-178, His-204, and Asp-300 contribute to the active site.

This sequence belongs to the CheB family. Post-translationally, phosphorylated by CheA. Phosphorylation of the N-terminal regulatory domain activates the methylesterase activity.

Its subcellular location is the cytoplasm. The enzyme catalyses [protein]-L-glutamate 5-O-methyl ester + H2O = L-glutamyl-[protein] + methanol + H(+). The catalysed reaction is L-glutaminyl-[protein] + H2O = L-glutamyl-[protein] + NH4(+). Functionally, involved in chemotaxis. Part of a chemotaxis signal transduction system that modulates chemotaxis in response to various stimuli. Catalyzes the demethylation of specific methylglutamate residues introduced into the chemoreceptors (methyl-accepting chemotaxis proteins or MCP) by CheR. Also mediates the irreversible deamidation of specific glutamine residues to glutamic acid. The polypeptide is Protein-glutamate methylesterase/protein-glutamine glutaminase 3 (Rhodopseudomonas palustris (strain BisB18)).